The chain runs to 268 residues: Glutamate 5-kinase (268 aa).

An ATP-binding site is contributed by Lys15. Residues Ser55, Asp142, and Asn158 each coordinate substrate. 178 to 179 is an ATP binding site; sequence SD.

The protein belongs to the glutamate 5-kinase family.

Its subcellular location is the cytoplasm. The enzyme catalyses L-glutamate + ATP = L-glutamyl 5-phosphate + ADP. The protein operates within amino-acid biosynthesis; L-proline biosynthesis; L-glutamate 5-semialdehyde from L-glutamate: step 1/2. Its function is as follows. Catalyzes the transfer of a phosphate group to glutamate to form L-glutamate 5-phosphate. This Oenococcus oeni (strain ATCC BAA-331 / PSU-1) protein is Glutamate 5-kinase.